A 453-amino-acid polypeptide reads, in one-letter code: Na(+)/H(+) antiporter NhaA (453 aa).

11 helical membrane-spanning segments follow: residues 28–48 (FLHI…AALI), 79–99 (LHFL…GMEI), 115–135 (ALPL…YFIL), 144–164 (GWAV…ALLG), 173–193 (VFLL…IAVF), 196–216 (GGMD…VLGM), 241–261 (TGAH…VFAP), 321–341 (VAFG…LDGI), 355–375 (VLIA…FLMV), 393–413 (LVGL…TLAF), and 424–444 (LGIL…GFFQ).

It belongs to the NhaA Na(+)/H(+) (TC 2.A.33) antiporter family.

Its subcellular location is the cell inner membrane. It carries out the reaction Na(+)(in) + 2 H(+)(out) = Na(+)(out) + 2 H(+)(in). In terms of biological role, na(+)/H(+) antiporter that extrudes sodium in exchange for external protons. The protein is Na(+)/H(+) antiporter NhaA of Janthinobacterium sp. (strain Marseille) (Minibacterium massiliensis).